The following is a 357-amino-acid chain: tRNA-specific 2-thiouridylase MnmA (357 aa).

Residues 7 to 14 (GLSGGVDS) and Met33 contribute to the ATP site. Positions 94–96 (NPD) are interaction with target base in tRNA. Cys99 functions as the Nucleophile in the catalytic mechanism. Cys99 and Cys195 are joined by a disulfide. Gly123 serves as a coordination point for ATP. Residues 145–147 (KDQ) are interaction with tRNA. The active-site Cysteine persulfide intermediate is Cys195. The interval 303–304 (RY) is interaction with tRNA.

The protein belongs to the MnmA/TRMU family.

It is found in the cytoplasm. The catalysed reaction is S-sulfanyl-L-cysteinyl-[protein] + uridine(34) in tRNA + AH2 + ATP = 2-thiouridine(34) in tRNA + L-cysteinyl-[protein] + A + AMP + diphosphate + H(+). In terms of biological role, catalyzes the 2-thiolation of uridine at the wobble position (U34) of tRNA, leading to the formation of s(2)U34. The chain is tRNA-specific 2-thiouridylase MnmA from Akkermansia muciniphila (strain ATCC BAA-835 / DSM 22959 / JCM 33894 / BCRC 81048 / CCUG 64013 / CIP 107961 / Muc).